The primary structure comprises 209 residues: ATP phosphoribosyltransferase (209 aa).

This sequence belongs to the ATP phosphoribosyltransferase family. Short subfamily. In terms of assembly, heteromultimer composed of HisG and HisZ subunits.

Its subcellular location is the cytoplasm. It catalyses the reaction 1-(5-phospho-beta-D-ribosyl)-ATP + diphosphate = 5-phospho-alpha-D-ribose 1-diphosphate + ATP. Its pathway is amino-acid biosynthesis; L-histidine biosynthesis; L-histidine from 5-phospho-alpha-D-ribose 1-diphosphate: step 1/9. Its function is as follows. Catalyzes the condensation of ATP and 5-phosphoribose 1-diphosphate to form N'-(5'-phosphoribosyl)-ATP (PR-ATP). Has a crucial role in the pathway because the rate of histidine biosynthesis seems to be controlled primarily by regulation of HisG enzymatic activity. The polypeptide is ATP phosphoribosyltransferase (Alkaliphilus metalliredigens (strain QYMF)).